The sequence spans 182 residues: UPF0148 protein VNG_2366C (182 aa).

The disordered stretch occupies residues 1–162 (MSNTDDGFDK…RASDADDPRT (162 aa)). 2 stretches are compositionally biased toward basic and acidic residues: residues 7 to 33 (GFDK…ETAR) and 47 to 62 (DHCD…HDGE). A compositionally biased stretch (low complexity) spans 105-122 (PDTSSSTAAATDDVPTAA). The span at 153–162 (RASDADDPRT) shows a compositional bias: basic and acidic residues.

Belongs to the UPF0148 family.

The polypeptide is UPF0148 protein VNG_2366C (Halobacterium salinarum (strain ATCC 700922 / JCM 11081 / NRC-1) (Halobacterium halobium)).